The following is a 379-amino-acid chain: Cytochrome b (379 aa).

A run of 4 helical transmembrane segments spans residues 33–53 (FGSL…FLAM), 77–98 (WLIR…YLHI), 113–133 (WNIG…GYVL), and 178–198 (FFAF…LHLL). Histidine 83 and histidine 97 together coordinate heme b. Residues histidine 182 and histidine 196 each contribute to the heme b site. Histidine 201 provides a ligand contact to a ubiquinone. The next 4 membrane-spanning stretches (helical) occupy residues 226–246 (YKDL…ALFY), 288–308 (LGGV…PILH), 320–340 (ASQL…WIGG), and 347–367 (YIII…VLNP).

This sequence belongs to the cytochrome b family. The cytochrome bc1 complex contains 3 respiratory subunits (MT-CYB, CYC1 and UQCRFS1), 2 core proteins (UQCRC1 and UQCRC2) and probably 6 low-molecular weight proteins. Requires heme b as cofactor.

It localises to the mitochondrion inner membrane. Component of the ubiquinol-cytochrome c reductase complex (complex III or cytochrome b-c1 complex) that is part of the mitochondrial respiratory chain. The b-c1 complex mediates electron transfer from ubiquinol to cytochrome c. Contributes to the generation of a proton gradient across the mitochondrial membrane that is then used for ATP synthesis. In Anguilla rostrata (American eel), this protein is Cytochrome b (mt-cyb).